The following is a 1032-amino-acid chain: Suppression of tumorigenicity 18 protein (1032 aa).

Disordered stretches follow at residues 29 to 76, 162 to 213, and 325 to 354; these read RAEE…TNDH, GRDK…LTYN, and RQPK…AKCP. The segment covering 40-51 has biased composition (basic residues); sequence NKRKSLLMKPRH. Residues 52-76 show a composition bias toward basic and acidic residues; it reads YSPDMDCKENPDNRNEDDGLETNDH. CCHHC-type zinc fingers lie at residues 344–387, 388–431, 700–743, 744–787, 792–835, and 845–888; these read PRPE…PLEI, LAMH…KLAM, RDLK…LKSL, MAAN…GIKM, EEKE…QKEN, and KLNK…IKKV. Zn(2+)-binding residues include Cys353, Cys358, His371, Cys377, Cys397, Cys402, His415, Cys421, Cys709, Cys714, His727, Cys733, Cys753, Cys758, His771, Cys777, Cys801, Cys806, His819, Cys825, Cys854, Cys859, His872, and Cys878. Positions 905-974 form a coiled coil; the sequence is IEGDEEIRHL…KELAGLSQAL (70 aa).

The protein belongs to the MYT1 family. Detected in brain.

It localises to the nucleus. In terms of biological role, repressor that binds to DNA sequences containing a bipartite element consisting of a direct repeat of the sequence 5'-AAAGTTT-3' separated by 2-9 nucleotides. Represses basal transcription activity from target promoters. The protein is Suppression of tumorigenicity 18 protein (St18) of Rattus norvegicus (Rat).